The primary structure comprises 505 residues: Transcription factor APG (505 aa).

Disordered regions lie at residues 1–40, 61–99, 119–156, 169–242, 256–312, 324–344, and 469–505; these read MLRG…CSAA, GAAN…DTAP, PAAA…SGGG, PLQQ…APTT, AQRL…SQDE, RRSA…NLSE, and PPPP…VKQA. The segment covering 23-33 has biased composition (pro residues); it reads PLRPPPPPPFQ. A compositionally biased stretch (polar residues) spans 131–144; sequence CSSSHGAVVPSTSA. Over residues 174-199 the composition is skewed to low complexity; the sequence is PSGGETASASASAAATSTVPVESTVV. Residues 200-212 are compositionally biased toward polar residues; it reads QAATNRLRSTPLF. The segment covering 222–239 has biased composition (pro residues); that stretch reads PPKPSPRAAAPPPPPPLA. Basic and acidic residues predominate over residues 288-299; sequence GDRRQLNWRDSH. Residues 300–310 are compositionally biased toward polar residues; that stretch reads NNQSAEWSASQ. Residues 324 to 334 show a composition bias toward basic residues; the sequence is RRSAARSSKRS. A compositionally biased stretch (basic and acidic residues) spans 335–344; sequence RTAEVHNLSE. A bHLH domain is found at 335–384; the sequence is RTAEVHNLSERRRRDRINEKMRALQELIPNCNKIDKASMLEEAIEYLKTL. Positions 492-505 are enriched in low complexity; the sequence is GAADAGNAPAVKQA.

The protein belongs to the bHLH protein family. Homodimer and heterodimer with ILI5 or ILI6.

It localises to the nucleus. In terms of biological role, atypical bHLH transcription factor that acts as a negative regulator of grain size. Binds the transcription factor ILI6 and forms a heterodimer of antagonistic bHLH transcription factors that regulates grain length and weight by controlling cell elongation in lemma and palea. May be involved in the control of lamina inclination through brassinosteroid signaling pathway. This Oryza sativa subsp. japonica (Rice) protein is Transcription factor APG (APG).